We begin with the raw amino-acid sequence, 557 residues long: Potassium-transporting ATPase potassium-binding subunit (557 aa).

Helical transmembrane passes span 5–25 (GFLL…PLGS), 63–83 (LSAI…MLLG), 132–152 (GLTV…FALI), 170–190 (LLRI…LFFI), 253–273 (FVQM…FGEV), 283–303 (LLWA…WAEV), 329–349 (VLVS…AVIA), 356–376 (ALGG…FGGV), 379–399 (GLYG…LMIG), 416–436 (LTAL…ALAM), 484–504 (LLAL…MAIA), and 526–546 (LFVG…FIPA).

It belongs to the KdpA family. As to quaternary structure, the system is composed of three essential subunits: KdpA, KdpB and KdpC.

The protein localises to the cell inner membrane. Part of the high-affinity ATP-driven potassium transport (or Kdp) system, which catalyzes the hydrolysis of ATP coupled with the electrogenic transport of potassium into the cytoplasm. This subunit binds the periplasmic potassium ions and delivers the ions to the membrane domain of KdpB through an intramembrane tunnel. In Escherichia coli O6:K15:H31 (strain 536 / UPEC), this protein is Potassium-transporting ATPase potassium-binding subunit.